The chain runs to 630 residues: MTDTNHSSMRQHSLQSLAIAAIGVVFGDIGTSPLYSLKEAFSPAHGIPLTPSAILGVISLLFWAIILVVGIKYVLFVMRADNNGEGGVLALMALSLRPLNPKSRITGLMMALGIFGACMFYGDAVITPAISVMSAVEGLEVATPQLSHLVLPITIVILIALFWIQRHGTATVGKLFGPIMVIWFVTIAALGVYHIARAPMIVSAINPYYAFSFMSEHVLLAYVVLGSVVLVLTGAEALYADMGHFGAKPIRLAAYVLVMPSLVLNYFGQGALLLLDPKAIENPFFLLAPQWAALPLVVLSTVATVIASQAVISGAYSLTSQAIQLGYVPRMKILHTSELAIGQIYVPVVNWLLLFVILCIVIGFKSSDNLAAAYGIAVTATMVITTILAAVVMVKVWNWNKLLVAMIIGVFLVIDLGFFGANLLKVEQGGWLPLGIGALLFFLLMTWYKGRHIVKERTAADGIPLAPFLQGLLAHPPHRVSGTAIYLTGNDTLVPVSLLHNLKHNKVLHERTIFMTFVTRDIPYVKDDERVTVHDAGEGLYIVKAEYGFNETPDVKAVLEEVSCQRAMTFELMDTSFFLARETVVPTHLPGMSIWRERVFAWMHQNAAKPTDFFAIPANRVVELGTKIEI.

Helical transmembrane passes span 17-37 (LAIA…LYSL), 51-71 (PSAI…VVGI), 105-125 (ITGL…GDAV), 144-164 (PQLS…LFWI), 175-195 (LFGP…VYHI), 218-238 (VLLA…AEAL), 255-275 (YVLV…LLLL), 283-303 (PFFL…STVA), 344-364 (IYVP…VIGF), 374-394 (YGIA…VVMV), 402-422 (LLVA…FGAN), and 428-448 (QGGW…MTWY).

Belongs to the HAK/KUP transporter (TC 2.A.72) family.

The protein resides in the cell inner membrane. It catalyses the reaction K(+)(in) + H(+)(in) = K(+)(out) + H(+)(out). In terms of biological role, transport of potassium into the cell. Likely operates as a K(+):H(+) symporter. This Burkholderia thailandensis (strain ATCC 700388 / DSM 13276 / CCUG 48851 / CIP 106301 / E264) protein is Probable potassium transport system protein Kup.